Here is a 310-residue protein sequence, read N- to C-terminus: Glutaminase (310 aa).

7 residues coordinate substrate: Ser-67, Asn-118, Glu-161, Asn-168, Tyr-192, Tyr-244, and Val-262.

This sequence belongs to the glutaminase family. Homotetramer.

It carries out the reaction L-glutamine + H2O = L-glutamate + NH4(+). This Legionella pneumophila (strain Lens) protein is Glutaminase.